The primary structure comprises 484 residues: MEKIRTRYAPSPTGYLHVGGTRTAIFNFLLAKHFNGEFIIRIEDTDTERNIKEGINSQFDNLRWLGVIADESVYNPGNYGPYLQSQKLAVYKKLAFDLIEKNLAYRCFCSKEKLESDRKQAINNHKTPKYLGHCRNLHSKKITNHLEKNDPFTIRLKINNEAEYSWNDLVRGQITIPGSALTDIVILKANGVATYNFAVVIDDYDMEITDVLRGAEHISNTAYQLAIYQALGFKRIPRFGHLSVIVDESGKKLSKRDEKTTQFIEQFKQQGYLPEALLNFLALLGWHPQYNQEFFNLKQLIENFSLSRVVSAPAFFDIKKLQWINANYIKQLTDNAYFNFIDNYLDVKVDYLKDKNREISLLFKNQITHGVQINELIRESFATKIGVENLAKKSHILFKNIKLFLEQLAKSLQGLEEWKAEQIKTTINKVGAVFNLKGKQLFMPIRLIFTNKEHGPDLAHIIEIFDKESAINLIKQFINATNLF.

The 'HIGH' region signature appears at 10 to 20 (PSPTGYLHVGG). Positions 252–256 (KLSKR) match the 'KMSKS' region motif. K255 is an ATP binding site.

It belongs to the class-I aminoacyl-tRNA synthetase family. Glutamate--tRNA ligase type 1 subfamily. Monomer.

It is found in the cytoplasm. It carries out the reaction tRNA(Glu) + L-glutamate + ATP = L-glutamyl-tRNA(Glu) + AMP + diphosphate. Functionally, catalyzes the attachment of glutamate to tRNA(Glu) in a two-step reaction: glutamate is first activated by ATP to form Glu-AMP and then transferred to the acceptor end of tRNA(Glu). The polypeptide is Glutamate--tRNA ligase (Mycoplasma genitalium (strain ATCC 33530 / DSM 19775 / NCTC 10195 / G37) (Mycoplasmoides genitalium)).